The primary structure comprises 307 residues: Porphobilinogen deaminase (307 aa).

Residue Cys-241 is modified to S-(dipyrrolylmethanemethyl)cysteine.

It belongs to the HMBS family. In terms of assembly, monomer. The cofactor is dipyrromethane.

The catalysed reaction is 4 porphobilinogen + H2O = hydroxymethylbilane + 4 NH4(+). The protein operates within porphyrin-containing compound metabolism; protoporphyrin-IX biosynthesis; coproporphyrinogen-III from 5-aminolevulinate: step 2/4. Functionally, tetrapolymerization of the monopyrrole PBG into the hydroxymethylbilane pre-uroporphyrinogen in several discrete steps. In Coxiella burnetii (strain RSA 331 / Henzerling II), this protein is Porphobilinogen deaminase.